A 507-amino-acid chain; its full sequence is Histidine ammonia-lyase (507 aa).

The 5-imidazolinone (Ala-Gly) cross-link spans 141 to 143 (ASG). At Ser142 the chain carries 2,3-didehydroalanine (Ser).

It belongs to the PAL/histidase family. Post-translationally, contains an active site 4-methylidene-imidazol-5-one (MIO), which is formed autocatalytically by cyclization and dehydration of residues Ala-Ser-Gly.

The protein resides in the cytoplasm. It catalyses the reaction L-histidine = trans-urocanate + NH4(+). The protein operates within amino-acid degradation; L-histidine degradation into L-glutamate; N-formimidoyl-L-glutamate from L-histidine: step 1/3. The chain is Histidine ammonia-lyase from Burkholderia orbicola (strain MC0-3).